Consider the following 560-residue polypeptide: MPNQRPLYIPFSGPALLETPLLNKGSAFSSEERDSFNLTGLLPHNIETIEEQSLRAYHQLRSFTTDIDKHIYLRNIQDTNETLFHHLIEQHIEEVMPLIYTPTVGQACEKFSQIYRRKRGLFISYPDRHKIDDMLQNATKQKVKVIVVTDGERILGLGDQGIGGMGIPIGKLALYTACGGISPAYCLPILLDVGTNNQQLLDDPMYMGWRNQRISGDEYNEFVDLFIQAVKRRWPEVLLQFEDFAQENATPLLNRYRDQLCCFNDDIQGTAAVSVGTLIAACLNKGQKLSQQKIAFLGAGSAGCGIAEHIIRQMQREGLTEEQARKQVFMVDRYGLLTDSMTELQKFQAPLVQKESAIESWDKSQKLGLAQVVKQAKITVLFGVSGQKGLFTREVIEALCVNTEHPIVLPLSNPTSRVEATPQEVTSWSRGKAIVATGSPFPNTTFEDQSFEISQCNNSYIFPGIGLGVLAAHATGISDNMLMSASQALADISMEYEKAPGAILPPIKFIREISEKIAYAVALQAIEDKLALPVTAENLERRLKANFWLPRYHNYRRTSF.

Y100 serves as the catalytic Proton donor. An NAD(+)-binding site is contributed by R153. K171 (proton acceptor) is an active-site residue. E242, D243, and D266 together coordinate a divalent metal cation. NAD(+) is bound by residues D266 and N413.

The protein belongs to the malic enzymes family. As to quaternary structure, homotetramer. Mg(2+) serves as cofactor. Requires Mn(2+) as cofactor.

The catalysed reaction is (S)-malate + NAD(+) = pyruvate + CO2 + NADH. It catalyses the reaction oxaloacetate + H(+) = pyruvate + CO2. The sequence is that of NAD-dependent malic enzyme from Psychrobacter arcticus (strain DSM 17307 / VKM B-2377 / 273-4).